The chain runs to 520 residues: Tubby-related protein 2 (520 aa).

Residues S135 and S190 each carry the phosphoserine modification. The interval 141 to 236 is disordered; it reads EVSVENGSVS…GTNSSAAHNE (96 aa). The segment covering 211–223 has biased composition (basic and acidic residues); the sequence is QKEEDLEKKREAS. Polar residues predominate over residues 224-233; it reads ESTGTNSSAA.

Belongs to the TUB family. Strongly expressed in testis. Also expressed in retina. Expressed in cancer cell lines.

It is found in the cytoplasm. The protein resides in the secreted. The polypeptide is Tubby-related protein 2 (TULP2) (Homo sapiens (Human)).